A 502-amino-acid polypeptide reads, in one-letter code: L-amino-acid oxidase BmooLAAO-I (502 aa).

The signal sequence occupies residues 1–18; that stretch reads MNVFFTFSLLFLAALGSC. C28 and C191 are oxidised to a cystine. FAD is bound by residues 61 to 62, 81 to 82, R89, and 105 to 108; these read MS, EA, and GPMR. R108 contributes to the substrate binding site. A glycan (N-linked (GlcNAc...) asparagine) is linked at N190. H241 serves as a coordination point for substrate. V279 lines the FAD pocket. An intrachain disulfide couples C349 to C430. Residue Y390 coordinates substrate. FAD contacts are provided by residues E475 and 482–487; that span reads GWIDST. 482 to 483 provides a ligand contact to substrate; the sequence is GW.

This sequence belongs to the flavin monoamine oxidase family. FIG1 subfamily. As to quaternary structure, homodimer; non-covalently linked. FAD serves as cofactor. Post-translationally, N-glycosylated. The enzymatic activity is not affected by deglycosylation. In terms of tissue distribution, expressed by the venom gland.

Its subcellular location is the secreted. It catalyses the reaction an L-alpha-amino acid + O2 + H2O = a 2-oxocarboxylate + H2O2 + NH4(+). The catalysed reaction is L-leucine + O2 + H2O = 4-methyl-2-oxopentanoate + H2O2 + NH4(+). The enzyme catalyses L-phenylalanine + O2 + H2O = 3-phenylpyruvate + H2O2 + NH4(+). It carries out the reaction L-tryptophan + O2 + H2O = indole-3-pyruvate + H2O2 + NH4(+). It catalyses the reaction L-methionine + O2 + H2O = 4-methylsulfanyl-2-oxobutanoate + H2O2 + NH4(+). The catalysed reaction is L-isoleucine + O2 + H2O = (S)-3-methyl-2-oxopentanoate + H2O2 + NH4(+). The enzyme catalyses L-histidine + O2 + H2O = 3-(imidazol-5-yl)pyruvate + H2O2 + NH4(+). It carries out the reaction L-tyrosine + O2 + H2O = 3-(4-hydroxyphenyl)pyruvate + H2O2 + NH4(+). It catalyses the reaction L-alanine + O2 + H2O = pyruvate + H2O2 + NH4(+). The catalysed reaction is L-valine + O2 + H2O = 3-methyl-2-oxobutanoate + H2O2 + NH4(+). Its activity is regulated as follows. Its enzymatic activities is reduced when it is exposed to Ca(2+), Zn(2+), Al(3+), Cu(2+) or Ni(2+) salts. Its function is as follows. Catalyzes an oxidative deamination of predominantly hydrophobic and aromatic L-amino acids, thus producing hydrogen peroxide that may contribute to the toxicity of the venom. Shows very high activity on L-Met, and L-Leu, high activity on L-Ile, L-Phe and L-Tyr and moderate activity on L-His, L-Val and L-Ala. Exhibits diverse biological activities, such as edema, apoptosis of tumor cell lines, antibacterial activities against both Gram-positive and Gram-negative bacteria, as well as induction of platelet aggregation. Effects of snake L-amino oxidases on platelets are controversial, since they either induce aggregation or inhibit agonist-induced aggregation. These different effects are probably due to different experimental conditions. Unlike other snake venom L-amino acid oxidases, does not induce hemorrhage. It may also induce hemolysis. Has parasiticidal activities against and leishmania, as a result of enzyme-catalyzed hydrogen peroxide production. The polypeptide is L-amino-acid oxidase BmooLAAO-I (Bothrops moojeni (Lance-headed viper)).